The chain runs to 413 residues: Alpha-1-antitrypsin-like protein CM55-ST (413 aa).

Residues 1 to 24 (MPSSISWGLLLLAALSCLGPGSLA) form the signal peptide. The residue at position 25 (Q25) is a Pyrrolidone carboxylic acid. N-linked (GlcNAc...) asparagine glycosylation is found at N65, N102, N165, and N266. Residues 368–387 (GGTVLGNIRSTLRYEVIFDR) are RCL.

It belongs to the serpin family. In terms of tissue distribution, expressed in liver.

The polypeptide is Alpha-1-antitrypsin-like protein CM55-ST (Tamias sibiricus (Siberian chipmunk)).